The following is a 237-amino-acid chain: Peptidase E (237 aa).

Residues S122, D137, and H159 each act as charge relay system in the active site.

The protein belongs to the peptidase S51 family.

Its subcellular location is the cytoplasm. It carries out the reaction Dipeptidase E catalyzes the hydrolysis of dipeptides Asp-|-Xaa. It does not act on peptides with N-terminal Glu, Asn or Gln, nor does it cleave isoaspartyl peptides.. Hydrolyzes dipeptides containing N-terminal aspartate residues. May play a role in allowing the cell to use peptide aspartate to spare carbon otherwise required for the synthesis of the aspartate family of amino acids. The protein is Peptidase E of Shewanella baltica (strain OS185).